Consider the following 407-residue polypeptide: Serine/threonine transporter SstT (407 aa).

Helical transmembrane passes span 14 to 34, 48 to 68, 82 to 102, 141 to 161, 192 to 212, 216 to 236, 290 to 310, 316 to 336, and 363 to 383; these read GSLVLQILVGIVAGVILATVS, FVGALKAIAPILVFILVAASI, IVILYLFGTFSAAVTAVLMSF, AVLTGNYIGILAWGVGLGLAL, IGIFGLVSATFATTGFTAIAG, LLLVLLAAMAIMALIINPAIV, IPLGATINMGGAAITITILTL, MGIQVDLLTAILLSVVAGVSA, and VAMQVVAVGFIIGVIQDSAET.

It belongs to the dicarboxylate/amino acid:cation symporter (DAACS) (TC 2.A.23) family.

The protein resides in the cell inner membrane. It carries out the reaction L-serine(in) + Na(+)(in) = L-serine(out) + Na(+)(out). The enzyme catalyses L-threonine(in) + Na(+)(in) = L-threonine(out) + Na(+)(out). Its function is as follows. Involved in the import of serine and threonine into the cell, with the concomitant import of sodium (symport system). This chain is Serine/threonine transporter SstT, found in Shewanella halifaxensis (strain HAW-EB4).